We begin with the raw amino-acid sequence, 678 residues long: Serine/threonine-protein kinase PLK (678 aa).

Positions 22–309 (YRPGKLLGKG…VKECLDHSWL (288 aa)) constitute a Protein kinase domain. Residues 28–36 (LGKGGFAYV) and Lys51 each bind ATP. The active-site Proton acceptor is Asp145. Residues Thr179 and Thr183 each carry the phosphothreonine; by autocatalysis modification. 2 consecutive POLO box domains span residues 435–516 (YIMS…YLEN) and 563–644 (FLKK…IIKA). The disordered stretch occupies residues 658–678 (KDSTKKSASGSSTRQLGQGGE). Over residues 663 to 678 (KSASGSSTRQLGQGGE) the composition is skewed to polar residues.

The protein belongs to the protein kinase superfamily. Ser/Thr protein kinase family. CDC5/Polo subfamily. As to quaternary structure, interacts with Kin-13. In terms of processing, autophosphorylated. Autophosphorylation is critical for its function in cell growth, cytokinesis and formation of flagella.

It is found in the cell projection. Its subcellular location is the cilium. It localises to the flagellum. The protein resides in the cytoplasm. The protein localises to the cytoskeleton. It is found in the flagellum basal body. Its subcellular location is the flagellum axoneme. It localises to the spindle. The protein resides in the membrane. The enzyme catalyses L-seryl-[protein] + ATP = O-phospho-L-seryl-[protein] + ADP + H(+). It catalyses the reaction L-threonyl-[protein] + ATP = O-phospho-L-threonyl-[protein] + ADP + H(+). Its activity is regulated as follows. Inhibited by GW843286X (GW), an ATP-competitive inhibitor. Inhibition leads to reduced growth, increased number of cells with more than four nuclei, increased number of cells with condensed nuclei, cell cycle arrest at G2/M or G1/S phase depending on the treatment time with GW, and increased length of membrane-bound portions of the caudal and anterior flagella. Involved in cell cycle. Involved in cell division. Involved in cytokinesis. Involved in flagella biogenesis and in regulation of flagella length in interphase. Involved in formation of median bodies during interphase. Phosphorylates Kin-13 in vitro. Likely regulates microtubule (MT) depolymerizing activity of Kin-13. This chain is Serine/threonine-protein kinase PLK, found in Giardia intestinalis (strain ATCC 50803 / WB clone C6) (Giardia lamblia).